A 347-amino-acid chain; its full sequence is S-adenosylmethionine:tRNA ribosyltransferase-isomerase (347 aa).

The protein belongs to the QueA family. As to quaternary structure, monomer.

Its subcellular location is the cytoplasm. The enzyme catalyses 7-aminomethyl-7-carbaguanosine(34) in tRNA + S-adenosyl-L-methionine = epoxyqueuosine(34) in tRNA + adenine + L-methionine + 2 H(+). It participates in tRNA modification; tRNA-queuosine biosynthesis. Its function is as follows. Transfers and isomerizes the ribose moiety from AdoMet to the 7-aminomethyl group of 7-deazaguanine (preQ1-tRNA) to give epoxyqueuosine (oQ-tRNA). The sequence is that of S-adenosylmethionine:tRNA ribosyltransferase-isomerase from Erythrobacter litoralis (strain HTCC2594).